Consider the following 821-residue polypeptide: Ent-pimara-8(14),15-diene synthase (821 aa).

Mg(2+) contacts are provided by D556, D560, N701, T705, and E709. A DDXXD motif motif is present at residues 556–560 (DDFFD).

This sequence belongs to the terpene synthase family. It depends on Mg(2+) as a cofactor. Highly expressed in roots, at intermediate levels in stems and at lower levels in leaves.

The catalysed reaction is ent-copalyl diphosphate = ent-pimara-8(14),15-diene + diphosphate. It participates in secondary metabolite biosynthesis; terpenoid biosynthesis. Its function is as follows. Involved in the biosynthesis of ent-kaurene diterpenoids natural products. Catalyzes the conversion of ent-copalyl diphosphate to ent-pimara-8(14),15-diene. This is Ent-pimara-8(14),15-diene synthase from Oryza sativa subsp. japonica (Rice).